A 95-amino-acid chain; its full sequence is UPF0223 protein Bsph_1378 (95 aa).

This sequence belongs to the UPF0223 family.

This chain is UPF0223 protein Bsph_1378, found in Lysinibacillus sphaericus (strain C3-41).